Here is a 393-residue protein sequence, read N- to C-terminus: Bone morphogenetic protein 2 (393 aa).

The signal sequence occupies residues 1–19 (MVAGTRCLLVLLLPQVLLG). Residues 20–279 (GAAGLIPELG…GHPLHKREKR (260 aa)) constitute a propeptide, cleaved by PCSK5. S85 carries the post-translational modification Phosphoserine. Residues N133, N161, and N197 are each glycosylated (N-linked (GlcNAc...) asparagine). Positions 268 to 290 (GKGHPLHKREKRQAKHKQRKRLK) are disordered. Positions 271-290 (HPLHKREKRQAKHKQRKRLK) are enriched in basic residues. 3 disulfides stabilise this stretch: C293–C358, C322–C390, and C326–C392. A glycan (N-linked (GlcNAc...) asparagine) is linked at N335.

Belongs to the TGF-beta family. In terms of assembly, homodimer; disulfide-linked. Interacts with SOSTDC1. Interacts with GREM2, RGMA, RGMB and RGMC. Interacts with ASPN. Interacts with MAFP5. Interacts with FBN1 (via N-terminal domain) and FBN2. Interacts with type I receptor BMPR1A. Interacts with type II receptor BMPR2. Interacts with SCUBE3. Interacts with TNFAIP6 (primarily via Link domain); this interaction is inhibited by hyaluronan. Interacts with ERFE. Interacts with BMPR1A/ALK3; the interaction may induce HAMP expression. Forms heterodimers with BMP6 in vitro; the heterodimer then binds to its receptor BMPR1A /ALK3 and may induce HAMP expression. Interacts with TGFBR3. In terms of tissue distribution, expressed in femur, calvaria, trachea, lung and ovary.

The protein resides in the secreted. Functionally, growth factor of the TGF-beta superfamily that plays essential roles in many developmental processes, including cardiogenesis, neurogenesis, and osteogenesis. Induces cartilage and bone formation. Initiates the canonical BMP signaling cascade by associating with type I receptor BMPR1A and type II receptor BMPR2. Once all three components are bound together in a complex at the cell surface, BMPR2 phosphorylates and activates BMPR1A. In turn, BMPR1A propagates signal by phosphorylating SMAD1/5/8 that travel to the nucleus and act as activators and repressors of transcription of target genes. Also acts to promote expression of HAMP, via the interaction with its receptor BMPR1A/ALK3. Can also signal through non-canonical pathways such as ERK/MAP kinase signaling cascade that regulates osteoblast differentiation. Also stimulates the differentiation of myoblasts into osteoblasts via the EIF2AK3-EIF2A-ATF4 pathway by stimulating EIF2A phosphorylation which leads to increased expression of ATF4 which plays a central role in osteoblast differentiation. Acts as a positive regulator of odontoblast differentiation during mesenchymal tooth germ formation, expression is repressed during the bell stage by MSX1-mediated inhibition of CTNNB1 signaling. This chain is Bone morphogenetic protein 2 (Bmp2), found in Rattus norvegicus (Rat).